The primary structure comprises 407 residues: E3 ubiquitin-protein ligase TRIM13 (407 aa).

The RING-type zinc-finger motif lies at 10-58; it reads CPICCSLFDDPRVLPCSHNFCKKCLEGLLEGNVRNSLWRPSPFKCPTCR. The segment at 89–131 adopts a B box-type zinc-finger fold; the sequence is PKMPVCKGHLGQPLNIFCVTDMQLICGICATRGEHTKHVFSSI. Zn(2+) contacts are provided by C94, H97, C117, and H123. Positions 172–200 form a coiled coil; it reads LQLLTKDSDKVKEFFEKLQHTLDQKKNEI. A helical transmembrane segment spans residues 316–336; sequence LLLMMVVLLGLLIFFGPTVFL.

This sequence belongs to the TRIM/RBCC family. In terms of assembly, interacts (via C-terminal domain) with VCP. Interacts with AKT1; the interaction ubiquitinates AKT1 and leads to its proteasomal degradation. Interacts with MDM2; the interaction ubiquitinates AKT1 and leads to its proteasomal degradation. Interacts with p62/SQSTM1. Interacts with TRAF6. Interacts with IKBKG/NEMO. Auto-ubiquitinated; requires the RING-type zinc finger. Auto-polyubiquitination leads to proteasomal degradation.

The protein localises to the endoplasmic reticulum membrane. It carries out the reaction S-ubiquitinyl-[E2 ubiquitin-conjugating enzyme]-L-cysteine + [acceptor protein]-L-lysine = [E2 ubiquitin-conjugating enzyme]-L-cysteine + N(6)-ubiquitinyl-[acceptor protein]-L-lysine.. The protein operates within protein modification; protein ubiquitination. Functionally, endoplasmic reticulum (ER) membrane anchored E3 ligase involved in the retrotranslocation and turnover of membrane and secretory proteins from the ER through a set of processes named ER-associated degradation (ERAD). This process acts on misfolded proteins as well as in the regulated degradation of correctly folded proteins. Enhances ionizing radiation-induced p53/TP53 stability and apoptosis via ubiquitinating MDM2 and AKT1 and decreasing AKT1 kinase activity through MDM2 and AKT1 proteasomal degradation. Regulates ER stress-induced autophagy, and may act as a tumor suppressor. Also plays a role in innate immune response by stimulating NF-kappa-B activity in the TLR2 signaling pathway. Ubiquitinates TRAF6 via the 'Lys-29'-linked polyubiquitination chain resulting in NF-kappa-B activation. Participates as well in T-cell receptor-mediated NF-kappa-B activation. In the presence of TNF, modulates the IKK complex by regulating IKBKG/NEMO ubiquitination leading to the repression of NF-kappa-B. This chain is E3 ubiquitin-protein ligase TRIM13 (Trim13), found in Mus musculus (Mouse).